A 271-amino-acid polypeptide reads, in one-letter code: ATP synthase subunit a (271 aa).

Transmembrane regions (helical) follow at residues 31–51 (WDTILTSVIAGVIVVGLGLYM), 89–109 (FVAPMAVTLFVYILLCNWIGV), 124–144 (DINLTLTLALVVIVPMHIVSL), 186–206 (IFSGAIMVSLLALMPPYVLWL), and 216–236 (LGVGVIQAFIFALLTILYYAF). A disordered region spans residues 247-271 (DEHADGGDSSSRQASPTPLPAGQVR).

Belongs to the ATPase A chain family. As to quaternary structure, F-type ATPases have 2 components, CF(1) - the catalytic core - and CF(0) - the membrane proton channel. CF(1) has five subunits: alpha(3), beta(3), gamma(1), delta(1), epsilon(1). CF(0) has three main subunits: a(1), b(2) and c(9-12). The alpha and beta chains form an alternating ring which encloses part of the gamma chain. CF(1) is attached to CF(0) by a central stalk formed by the gamma and epsilon chains, while a peripheral stalk is formed by the delta and b chains.

It localises to the cell membrane. Functionally, key component of the proton channel; it plays a direct role in the translocation of protons across the membrane. This Acidothermus cellulolyticus (strain ATCC 43068 / DSM 8971 / 11B) protein is ATP synthase subunit a.